We begin with the raw amino-acid sequence, 298 residues long: Elongation factor Ts (298 aa).

The tract at residues 79 to 82 (TDFV) is involved in Mg(2+) ion dislocation from EF-Tu.

Belongs to the EF-Ts family.

Its subcellular location is the cytoplasm. In terms of biological role, associates with the EF-Tu.GDP complex and induces the exchange of GDP to GTP. It remains bound to the aminoacyl-tRNA.EF-Tu.GTP complex up to the GTP hydrolysis stage on the ribosome. The sequence is that of Elongation factor Ts (tsf) from Mycoplasma pneumoniae (strain ATCC 29342 / M129 / Subtype 1) (Mycoplasmoides pneumoniae).